Consider the following 670-residue polypeptide: Solute carrier organic anion transporter family member 1A5 (670 aa).

At 1-20 (MGETEKRVATHEVRCFSKIK) the chain is on the cytoplasmic side. Residues 21 to 40 (MFLLALTWAYVSKSLSGIYM) traverse the membrane as a helical segment. Residues 41–59 (NTMLTQIERQFDIPTSIVG) are Extracellular-facing. Residues 60–80 (FINGSFEIGNLLLIIFVSYFG) form a helical membrane-spanning segment. Over 81–86 (TKLHRP) the chain is Cytoplasmic. The chain crosses the membrane as a helical span at residues 87–111 (IMIGVGCVIMGLGCFLMSLPHFLMG). Topologically, residues 112–155 (RYEYETTISPTSNLSSNSFLCMENRSQTLKPTQDPAECIKEMKS) are extracellular. Asn124 and Asn135 each carry an N-linked (GlcNAc...) asparagine glycan. Residues 156–184 (LMWIYVLVGNIIRGIGETPIMPLGISYIE) traverse the membrane as a helical segment. Over 185 to 203 (DFAKSENSPLYIGILETGK) the chain is Cytoplasmic. Residues 204-224 (VFGPIVGLLLGSFCASIYVDT) traverse the membrane as a helical segment. The Extracellular segment spans residues 225-242 (GSVNTDDLTITPTDTRWV). The chain crosses the membrane as a helical span at residues 243–267 (GAWWIGFLICAGVNILSSIPFFFFP). The Cytoplasmic segment spans residues 268–311 (KTLPKEGLQDDVDGTNNDKEEKHREKAKEENRGITKDFLPFMKS). Residues 312 to 333 (LSCNPIYMLLILTSVLQINAFI) form a helical membrane-spanning segment. Residues 334 to 353 (NMFTFLPKYLEQQYGKSTAE) lie on the Extracellular side of the membrane. A helical transmembrane segment spans residues 354–377 (VVLLIGVYNLPPICIGYLLIGFIM). Topologically, residues 378–381 (KKFK) are cytoplasmic. A helical membrane pass occupies residues 382 to 405 (ITVKKAAYMAFCLSLFEYLLYFLH). Topologically, residues 406–513 (FMITCDNFPV…PECANKLQYF (108 aa)) are extracellular. One can recognise a Kazal-like domain in the interval 433–488 (NKVLADCNRGCSCSTNSWDPVCGDNGLAYMSACLAGCKKSVGTGTNMVFQNCSCIR). Disulfide bonds link Cys439–Cys469, Cys445–Cys465, and Cys454–Cys486. N-linked (GlcNAc...) asparagine glycans are attached at residues Asn483 and Asn492. The chain crosses the membrane as a helical span at residues 514–536 (LIMSVIGSFIYSITAIPGYMVLL). Residues 537-545 (RCIKPEEKS) lie on the Cytoplasmic side of the membrane. The helical transmembrane segment at 546–571 (LGIGLHAFCTRVFAGIPAPIYFGALI) threads the bilayer. Over 572-605 (DRTCLHWGTLKCGEPGACRMYNINNFRRIYLVLP) the chain is Extracellular. The helical transmembrane segment at 606–623 (AALRGSSYLPALFILILM) threads the bilayer. The Cytoplasmic segment spans residues 624-670 (RKFQFPGEIDSSETELAEMKITVKKSECTDVHGSPQVENDGELKTRL).

Belongs to the organo anion transporter (TC 2.A.60) family. As to expression, highly expressed in the kidney, moderately abundant in the retina, and even lower in the liver. Expressed (at protein level) in the small intestine. Expressed at lower levels in brain,lung, and retina.

The protein resides in the cell membrane. It is found in the basal cell membrane. The catalysed reaction is taurocholate(out) = taurocholate(in). The enzyme catalyses glycocholate(out) = glycocholate(in). It carries out the reaction taurochenodeoxycholate(out) = taurochenodeoxycholate(in). It catalyses the reaction tauroursodeoxycholate(out) = tauroursodeoxycholate(in). The catalysed reaction is 3,3',5'-triiodo-L-thyronine(out) = 3,3',5'-triiodo-L-thyronine(in). The enzyme catalyses L-thyroxine(out) = L-thyroxine(in). It carries out the reaction taurodeoxycholate(out) = taurodeoxycholate(in). It catalyses the reaction glycodeoxycholate(out) = glycodeoxycholate(in). The catalysed reaction is glycochenodeoxycholate(out) = glycochenodeoxycholate(in). The enzyme catalyses glycoursodeoxycholate(out) = glycoursodeoxycholate(in). It carries out the reaction estrone 3-sulfate(out) = estrone 3-sulfate(in). It catalyses the reaction prostaglandin E2(out) = prostaglandin E2(in). The catalysed reaction is substance P(out) = substance P(in). Na(+)-independent transporter that mediates the cellular uptake of a broad range of organic anions such as the endogenous bile salts cholate and deoxycholate, either in their unconjugated or conjugated forms (taurocholate and glycocholate), estrone 3-sulfate and prostaglandin E2, at the plasma membrane. Responsible for intestinal absorption of bile acids. Capable of thyroid hormone transport (both T3 or 3,3',5'-triiodo-L-thyronine, and T4 or L-tyroxine). Plays roles in blood-brain and -cerebrospinal fluid barrier transport of organic anions and signal mediators, and in hormone uptake by neural cells. May also play a role in the reuptake of neuropeptides such as substance P/TAC1 and vasoactive intestinal peptide/VIP released from retinal neurons. Shows a pH-sensitive substrate specificity which may be ascribed to the protonation state of the binding site and leads to a stimulation of substrate transport in an acidic microenvironment. Hydrogencarbonate/HCO3(-) acts as the probable counteranion that exchanges for organic anions. May contribute to regulate the transport of organic compounds in testis across the blood-testis-barrier. The chain is Solute carrier organic anion transporter family member 1A5 (Slco1a5) from Rattus norvegicus (Rat).